Reading from the N-terminus, the 206-residue chain is Holliday junction branch migration complex subunit RuvA (206 aa).

A domain I region spans residues 1 to 68; the sequence is MITFVRGMLA…EDAMQLFGFL (68 aa). Positions 69 to 147 are domain II; the sequence is EPGERELFGQ…KWREESGLSA (79 aa). The interval 147–151 is flexible linker; it reads AMGAR. The segment at 152 to 206 is domain III; it reads ASSRVYEEVELALLALGFAPGEVVRALDAVAPAMAGEEQTEAWLRAAIAWLSEQG.

It belongs to the RuvA family. In terms of assembly, homotetramer. Forms an RuvA(8)-RuvB(12)-Holliday junction (HJ) complex. HJ DNA is sandwiched between 2 RuvA tetramers; dsDNA enters through RuvA and exits via RuvB. An RuvB hexamer assembles on each DNA strand where it exits the tetramer. Each RuvB hexamer is contacted by two RuvA subunits (via domain III) on 2 adjacent RuvB subunits; this complex drives branch migration. In the full resolvosome a probable DNA-RuvA(4)-RuvB(12)-RuvC(2) complex forms which resolves the HJ.

It localises to the cytoplasm. The RuvA-RuvB-RuvC complex processes Holliday junction (HJ) DNA during genetic recombination and DNA repair, while the RuvA-RuvB complex plays an important role in the rescue of blocked DNA replication forks via replication fork reversal (RFR). RuvA specifically binds to HJ cruciform DNA, conferring on it an open structure. The RuvB hexamer acts as an ATP-dependent pump, pulling dsDNA into and through the RuvAB complex. HJ branch migration allows RuvC to scan DNA until it finds its consensus sequence, where it cleaves and resolves the cruciform DNA. The sequence is that of Holliday junction branch migration complex subunit RuvA from Gloeobacter violaceus (strain ATCC 29082 / PCC 7421).